The following is a 258-amino-acid chain: Type II restriction enzyme HindII (258 aa).

The enzyme catalyses Endonucleolytic cleavage of DNA to give specific double-stranded fragments with terminal 5'-phosphates.. Its function is as follows. A P subtype restriction enzyme that recognizes the double-stranded sequence 5'-GTYRAC-3' and cleaves after Y-3. In Haemophilus influenzae (strain ATCC 51907 / DSM 11121 / KW20 / Rd), this protein is Type II restriction enzyme HindII (hindIIR).